A 471-amino-acid chain; its full sequence is MSTDTGVSVRVRGIYSTALTKLFLDRGFRISQPSQKIAERLGIEKTYDEFDVDIYDKRDHHGVILVGTEVEKVKEVFEEEFIDVLFRKLPYQLYGIYKGLVIKRDERYVYVDIGNAIGTIPVEEGKNLHEGDEVLVQVKKHNLLPHLSTMLTIPGDYAVLIPKPVGVQRHVKISRKIRDSSERERLRILGLSIDMGEWGILWRTAAAYKDWNTLRDEIIRLSKIADRLKEAEKKSAPEQIVEGRNIYEVEFGGGAKKKLDEIRNRVVPTVEGHHMLKAYDVEFSFAVEIAEGILAKVPGQRIKVNQGFWEALLDSKGPKKGWLFFLEHNKPDGQRYKLGPGEIVEVTFNPLRITLRRNLKPGKFYDGLDLPIEFGDYAITEIEAGKWWFVHRYYDRNGNLKGEYYNINTPVEIYPDRARYIDLEIDIVKWPDGEKEIIDKDKLREHYEDGIISEKLYKAVLRITQEVYERI.

It belongs to the FAU-1 family.

Its function is as follows. Probable RNase involved in rRNA stability through maturation and/or degradation of precursor rRNAs. Binds to RNA in loop regions with AU-rich sequences. The polypeptide is Probable ribonuclease FAU-1 (Thermococcus gammatolerans (strain DSM 15229 / JCM 11827 / EJ3)).